We begin with the raw amino-acid sequence, 422 residues long: MSARAGIVVTGTEVLTGRVQDLNGPWLADRLLELGVELSHITLCGDRPADIEAQLRFLADQGVDLIITSGGLGPTADDMTVEVVSRFCGRELELDPGLETRIGEIVTRLMARFPDVDPAAVIAANRKQAFVPDGAVILDPVGTAPGVVVPGTPTVVVLPGPPRELQPMWQAAVAADAVQTAIADRVSYRQDTVRMFGLPESGLAETLREAEGSVAGFDRLEITTCLRRGELEIVTRYEPRDADAYDGLLNMLRDKHSRELFSEDGALVDDQVAALLAGRTIATAESCTAGLLAARLTDRAGSSAYVAGGVVSYSNDAKTDLLGVDAELIAAHGAVSEPVAEAMAAGALQRFGADTAVAITGIAGPGGGTPAKPVGTVCFSVALADGTFLTRTSQLPGNRSDVRERSTTVAMHLLRRALSGGG.

It belongs to the CinA family.

This chain is CinA-like protein, found in Mycolicibacterium gilvum (strain PYR-GCK) (Mycobacterium gilvum (strain PYR-GCK)).